A 139-amino-acid chain; its full sequence is Protein Turandot B (139 aa).

Positions 1–21 are cleaved as a signal peptide; it reads MNFNMSMICFALLLIVTLCSA.

Belongs to the Turandot family.

Its subcellular location is the secreted. In terms of biological role, a humoral factor that may play a role in stress tolerance. This chain is Protein Turandot B, found in Drosophila yakuba (Fruit fly).